Here is a 521-residue protein sequence, read N- to C-terminus: Beta-glucosidase 11 (521 aa).

Residues 1–23 form the signal peptide; the sequence is MKLLSNSLMFLPLLALALTAVSS. Residues Gln45, His144, and 189-190 contribute to the a beta-D-glucoside site; that span reads NE. Residue Glu190 is the Proton donor of the active site. A disulfide bond links Cys209 and Cys217. Residues Asn216 and Asn221 are each glycosylated (N-linked (GlcNAc...) asparagine). Tyr356 provides a ligand contact to a beta-D-glucoside. N-linked (GlcNAc...) asparagine glycans are attached at residues Asn364 and Asn388. 3 residues coordinate a beta-D-glucoside: Glu422, Trp466, and Phe482. The active-site Nucleophile is Glu422.

Belongs to the glycosyl hydrolase 1 family.

The catalysed reaction is Hydrolysis of terminal, non-reducing beta-D-glucosyl residues with release of beta-D-glucose.. In Arabidopsis thaliana (Mouse-ear cress), this protein is Beta-glucosidase 11.